The following is a 449-amino-acid chain: Glucose-6-phosphate isomerase (449 aa).

Glu-291 acts as the Proton donor in catalysis. Catalysis depends on residues His-312 and Lys-426.

This sequence belongs to the GPI family.

It is found in the cytoplasm. The enzyme catalyses alpha-D-glucose 6-phosphate = beta-D-fructose 6-phosphate. It functions in the pathway carbohydrate biosynthesis; gluconeogenesis. It participates in carbohydrate degradation; glycolysis; D-glyceraldehyde 3-phosphate and glycerone phosphate from D-glucose: step 2/4. Catalyzes the reversible isomerization of glucose-6-phosphate to fructose-6-phosphate. The polypeptide is Glucose-6-phosphate isomerase (Streptococcus pneumoniae serotype 19F (strain G54)).